The sequence spans 768 residues: Protein STRUBBELIG (768 aa).

The signal sequence occupies residues 1–24 (MSFTRWEVFFGLSVLALTMPFSAG). The Extracellular portion of the chain corresponds to 25–341 (VTNLRDVSAI…GSGKFWSTQR (317 aa)). A disulfide bridge connects residues Cys-57 and Cys-66. The N-linked (GlcNAc...) asparagine glycan is linked to Asn-70. LRR repeat units lie at residues 94–115 (SIQV…ALPS), 116–139 (SIRN…SFLS), 140–162 (DLSE…FQQL), 164–186 (KLTK…MGDL), 188–210 (SLKI…EDLF), and 211–231 (LTDL…NLLK). An N-linked (GlcNAc...) asparagine glycan is attached at Asn-119. Residues 241–334 (PFNTSIITPP…ISPPSGSGSG (94 aa)) are disordered. N-linked (GlcNAc...) asparagine glycosylation occurs at Asn-243. Pro residues-rich tracts occupy residues 248 to 283 (TPPP…PFAP) and 291 to 301 (QHPPPSPPLVW). The segment covering 315 to 334 (NSVSGQPTLQISPPSGSGSG) has biased composition (polar residues). A helical transmembrane segment spans residues 342–362 (IILVVSSVAIIVLVSGLCVTL). The Cytoplasmic portion of the chain corresponds to 363–768 (WRCCRSKIYN…EIVQDLQHMI (406 aa)). A disordered region spans residues 385–477 (PYFNKPPSQP…RAAHFPPGLN (93 aa)). The span at 439–464 (SYYNKDVNTPQKPLQQPPRQFQSNDT) shows a compositional bias: polar residues. Residues 497-768 (FSEENIIGEG…EIVQDLQHMI (272 aa)) form the Protein kinase domain. ATP is bound by residues 503-511 (IGEGSIGNV) and Lys-525.

The protein belongs to the protein kinase superfamily. Ser/Thr protein kinase family. Interacts (via intra-cellular domain) with AN; this interaction is not required for correct subcellular localization and recycling of SUB. Binds to QKY and POQ at the plasma membrane. Binds to QKY at plasmodesmata (PD) in root epidermal cells to promote tissue morphogenesis. As to expression, expressed in leaves, stems, inflorescences, flower buds and developing root epidermis.

The protein resides in the cell membrane. The protein localises to the cell junction. It localises to the plasmodesma. Regulated at the post-transcriptional level. In terms of biological role, regulates the expression of transcription factors that define the cell fates. Acts in a non-cell-autonomous fashion, functions in a radial inside-out signaling process, and mediates cell morphogenesis and cell fate across clonally distinct cell layers in floral primordia, developing ovules, and root meristems. Seems to be required for the regulation of cell shape and the orientation of the mitotic division plane. Involved in root hair specification, in the formation of the outer integument and the shape of organs such as carpels and petals and is necessary for the shape and height of the stem. Non-functional SUB proteins are retained in the endoplasmic reticulum and degraded by endoplasmic reticulum-associated degradation (ERAD). Collaboratively with QKY and POQ, regulates cell growth anisotropy during gynoecium development, thus linking together cell-cell communication and cellular growth. Together with QKY, links RLK-dependent signal transduction and intercellular communication mediated by plasmodesmata (PD) to regulate tissue morphogenesis. The chain is Protein STRUBBELIG from Arabidopsis thaliana (Mouse-ear cress).